Here is a 260-residue protein sequence, read N- to C-terminus: MDKRWSLQGLTALVTGGASGIGHAIVEELAGFGAKIHVCDISKTLLNQSLSEWEKKGFQVSGSVCDASNRLERETLMQTVTTIFDGKLNILVNNVGTIRTKPTIEYEAEDFSFLISTNLESAYHLSQLSHPLLKASGNGIITFISSAAGIVSFDAASIYGLTKGALNQLARNLACEWAKDGIRANAVAPNFITTALAKPFLEDAGFNEILSSRTPLGRAGEPREVASLVAFLCLPAASYITGQTICVDGGLTVNGFSYQP.

Position 13 to 37 (13 to 37) interacts with NADP(+); that stretch reads LVTGGASGIGHAIVEELAGFGAKIH. Substrate is bound at residue Ser146. The Proton acceptor role is filled by Tyr159.

This sequence belongs to the short-chain dehydrogenases/reductases (SDR) family. SDR65C subfamily.

In terms of biological role, reductase active only on small flexible lipophilic carbonyls. No activity with cyclic monoterpenes, tropinone, nitrogen-containing tropinone analogs, tropine or pseudotropine as substrate. In Arabidopsis thaliana (Mouse-ear cress), this protein is Tropinone reductase homolog At2g29330.